A 248-amino-acid polypeptide reads, in one-letter code: Ubiquinone/menaquinone biosynthesis C-methyltransferase UbiE (248 aa).

The S-adenosyl-L-methionine site is built by S68 and D92.

It belongs to the class I-like SAM-binding methyltransferase superfamily. MenG/UbiE family.

It catalyses the reaction a 2-demethylmenaquinol + S-adenosyl-L-methionine = a menaquinol + S-adenosyl-L-homocysteine + H(+). The catalysed reaction is a 2-methoxy-6-(all-trans-polyprenyl)benzene-1,4-diol + S-adenosyl-L-methionine = a 5-methoxy-2-methyl-3-(all-trans-polyprenyl)benzene-1,4-diol + S-adenosyl-L-homocysteine + H(+). It functions in the pathway quinol/quinone metabolism; menaquinone biosynthesis; menaquinol from 1,4-dihydroxy-2-naphthoate: step 2/2. It participates in cofactor biosynthesis; ubiquinone biosynthesis. Functionally, methyltransferase required for the conversion of demethylmenaquinol (DMKH2) to menaquinol (MKH2) and the conversion of 2-polyprenyl-6-methoxy-1,4-benzoquinol (DDMQH2) to 2-polyprenyl-3-methyl-6-methoxy-1,4-benzoquinol (DMQH2). The polypeptide is Ubiquinone/menaquinone biosynthesis C-methyltransferase UbiE (Rickettsia rickettsii (strain Iowa)).